The chain runs to 186 residues: Peptidyl-tRNA hydrolase (186 aa).

Tyr-14 contributes to the tRNA binding site. Residue His-19 is the Proton acceptor of the active site. TRNA is bound by residues Tyr-64, Asn-66, and Asn-112.

The protein belongs to the PTH family. As to quaternary structure, monomer.

The protein resides in the cytoplasm. The catalysed reaction is an N-acyl-L-alpha-aminoacyl-tRNA + H2O = an N-acyl-L-amino acid + a tRNA + H(+). Functionally, hydrolyzes ribosome-free peptidyl-tRNAs (with 1 or more amino acids incorporated), which drop off the ribosome during protein synthesis, or as a result of ribosome stalling. Catalyzes the release of premature peptidyl moieties from peptidyl-tRNA molecules trapped in stalled 50S ribosomal subunits, and thus maintains levels of free tRNAs and 50S ribosomes. The sequence is that of Peptidyl-tRNA hydrolase from Bacillus cereus (strain ATCC 10987 / NRS 248).